Reading from the N-terminus, the 705-residue chain is Dolichyl-diphosphooligosaccharide--protein glycosyltransferase subunit STT3A (705 aa).

At 1-17 (MTKLGFLRLSYEKQDTL) the chain is on the cytoplasmic side. Residues 18–38 (LKLLILSMAAVLSFSTRLFAV) traverse the membrane as a helical segment. Residues 39-119 (LRFESVIHEF…IDIRNVCVFL (81 aa)) are Lumenal-facing. A DXD motif 1 motif is present at residues 47-49 (EFD). Residue Asp-49 participates in Mn(2+) binding. The chain crosses the membrane as a helical span at residues 120–138 (APLFSSFTTIVTYHLTKEL). Residues 139–140 (KD) lie on the Cytoplasmic side of the membrane. The helical transmembrane segment at 141 to 158 (AGAGLLAAAMIAVVPGYI) threads the bilayer. At 159–169 (SRSVAGSYDNE) the chain is on the lumenal side. Residues Asp-167 and Glu-169 each coordinate Mn(2+). Residues 167–169 (DNE) carry the DXD motif 2 motif. Residues 170–189 (GIAIFCMLLTYYMWIKAVKT) traverse the membrane as a helical segment. Topologically, residues 190–191 (GS) are cytoplasmic. The helical transmembrane segment at 192–206 (IYWAAKCALAYFYMV) threads the bilayer. At 207–211 (SSWGG) the chain is on the lumenal side. Residues 212–228 (YVFLINLIPLHVLVLML) form a helical membrane-spanning segment. The Cytoplasmic portion of the chain corresponds to 229–233 (TGRFS). The chain crosses the membrane as a helical span at residues 234–259 (HRIYVAYCTVYCLGTILSMQISFVGF). Residues 260-267 (QPVLSSEH) lie on the Lumenal side of the membrane. A helical transmembrane segment spans residues 268–287 (MAAFGVFGLCQIHAFVDYLR). The Cytoplasmic portion of the chain corresponds to 288-300 (SKLNPQQFEVLFR). Residues 301 to 321 (SVISLVGFVLLTIGALLMLTG) form a helical membrane-spanning segment. Over 322 to 356 (KISPWTGRFYSLLDPSYAKNNIPIIASVSEHQPTT) the chain is Lumenal. The SVSE motif motif lies at 348–351 (SVSE). Residues 357–379 (WSSYYFDLQLLVFMFPVGLYYCF) form a helical membrane-spanning segment. The Cytoplasmic segment spans residues 380-385 (SNLSDA). Residues 386–402 (RIFIIMYGVTSMYFSAV) form a helical membrane-spanning segment. Topologically, residues 403–406 (MVRL) are lumenal. Arg-405 contacts dolichyl diphosphooligosaccharide. The helical transmembrane segment at 407 to 428 (MLVLAPVMCILSGIGVSQVLST) threads the bilayer. Over 429 to 453 (YMKNLDISRQDKKSKKQQDSTYPIK) the chain is Cytoplasmic. Residues 454-473 (NEVASGMILVMAFFLITYTF) form a helical membrane-spanning segment. The Lumenal portion of the chain corresponds to 474-705 (HSTWVTSEAY…DLDNRGLSRT (232 aa)). Residues 525 to 527 (WWD) are interacts with target acceptor peptide in protein substrate. The WWDYG motif signature appears at 525–529 (WWDYG). Tyr-530 contacts dolichyl diphosphooligosaccharide. Residues Asn-537 and Asn-544 are each glycosylated (N-linked (GlcNAc...) asparagine). An N-linked (GlcNAc...) (high mannose) asparagine glycan is attached at Asn-548. A DK motif motif is present at residues 592–599 (DINKFLWM).

This sequence belongs to the STT3 family. In terms of assembly, component of the oligosaccharyltransferase (OST) complex. There are 2 OST complexes, OST-A and OST-B, which contain STT3A or STT3B as catalytic subunit, respectively. OST-A and OST-B contain common core subunits RPN1, RPN2, OST48, OST4, DAD1 and TMEM258, and OST-A contains DC2/OSTC and KRTCAP2/KCP2 specific accessory subunits. OST-A complex assembly occurs through the formation of 3 subcomplexes. Subcomplex 1 contains RPN1 and TMEM258, subcomplex 2 contains the OST-A-specific subunits STT3A, DC2/OSTC, and KCP2 as well as the core subunit OST4, and subcomplex 3 contains RPN2, DAD1, and OST48. The OST-A complex can form stable complexes with the Sec61 complex or with both the Sec61 and TRAP complexes. Requires Mg(2+) as cofactor. The cofactor is Mn(2+).

The protein resides in the endoplasmic reticulum membrane. The enzyme catalyses a di-trans,poly-cis-dolichyl diphosphooligosaccharide + L-asparaginyl-[protein] = N(4)-(oligosaccharide-(1-&gt;4)-N-acetyl-beta-D-glucosaminyl-(1-&gt;4)-N-acetyl-beta-D-glucosaminyl)-L-asparaginyl-[protein] + a di-trans,poly-cis-dolichyl diphosphate + H(+). Its pathway is protein modification; protein glycosylation. Functionally, catalytic subunit of the oligosaccharyl transferase (OST) complex that catalyzes the initial transfer of a defined glycan (Glc(3)Man(9)GlcNAc(2) in eukaryotes) from the lipid carrier dolichol-pyrophosphate to an asparagine residue within an Asn-X-Ser/Thr consensus motif in nascent polypeptide chains, the first step in protein N-glycosylation. N-glycosylation occurs cotranslationally and the complex associates with the Sec61 complex at the channel-forming translocon complex that mediates protein translocation across the endoplasmic reticulum (ER). All subunits are required for a maximal enzyme activity. This subunit contains the active site and the acceptor peptide and donor lipid-linked oligosaccharide (LLO) binding pockets. STT3A is present in the majority of OST complexes and mediates cotranslational N-glycosylation of most sites on target proteins, while STT3B-containing complexes are required for efficient post-translational glycosylation and mediate glycosylation of sites that have been skipped by STT3A. STT3A-containing OST-A complex is also required to prevent hyperglycosylation of some target proteins by preventing glycosylation of facultative sites before folding of target proteins is completed. This is Dolichyl-diphosphooligosaccharide--protein glycosyltransferase subunit STT3A from Bos taurus (Bovine).